Reading from the N-terminus, the 131-residue chain is Small ribosomal subunit protein uS8 (131 aa).

Belongs to the universal ribosomal protein uS8 family. In terms of assembly, part of the 30S ribosomal subunit. Contacts proteins S5 and S12.

One of the primary rRNA binding proteins, it binds directly to 16S rRNA central domain where it helps coordinate assembly of the platform of the 30S subunit. The sequence is that of Small ribosomal subunit protein uS8 from Wolbachia sp. subsp. Brugia malayi (strain TRS).